The sequence spans 226 residues: Thymocyte nuclear protein 1 (226 aa).

Positions 1 to 38 are disordered; it reads MPRPRKRQTGTAGPDRKKLSGKRTKTENSESTSVKLEN. The short motif at 5-10 is the Nuclear localization signal element; sequence RKRQTG. Residues 14 to 28 are compositionally biased toward basic and acidic residues; sequence PDRKKLSGKRTKTEN. Residues 29–38 are compositionally biased toward polar residues; the sequence is SESTSVKLEN.

In terms of processing, phosphorylated. As to expression, expressed in the medulla containing mature thymocytes, but not the cortex having immature thymocytes (at protein level). Abundant expression seen in testis, liver, brain and kidney with lower levels of the expression in thymus, spleen, heart and stomach.

The protein resides in the nucleus. Its function is as follows. Specifically binds 5-hydroxymethylcytosine (5hmC), suggesting that it acts as a specific reader of 5hmC. The chain is Thymocyte nuclear protein 1 (Thyn1) from Mus musculus (Mouse).